Reading from the N-terminus, the 541-residue chain is MGRQDQQLQVLNALDAAKTQWYHFTAIIVAGMGFFTDAYDLFCISLVTKLLGRIYYTDPASPTPGSLPPNIAAAVNGVALCGTLSGQLFFGWLGDKLGRKSVYGMTLLLMVICSIASGLSFSHTPTSVMATLCFFRFWLGFGIGGDYPLSATIMSEYANKKTRGAFIAAVFAMQGFGILAGGVVTLAMSAGFQAAFPAPAYEVNAAASTVPQADYVWRIILMLGALPAILTYYWRMKMPETARYTALVAKDAKQASSDMAKVLQVEIEVEEEKLQDITRGRDYGLFSARFAKRHGAHLLGTAATWFLVDVAYYSQNLFQKDIFTSIHWIPKARTMSELEEVFRISRAQTLIALCGTVPGYWFTVFLIDIIGRFKIQLLGFAGMTAFMLGLAIPYHHWTMPGNQVIFVFLYGFTFFFANFGPNATTFIVPAEIFPARLRSTCHGISAASGKAGAIIGAFGFLYAAQPQDKAHVDAGYKPGIGVRNALFVLAGCNLVGFLMTWMLVPESKGKSLEEMSGEADDEEASANGGATAVNSSGVEMV.

The Cytoplasmic portion of the chain corresponds to 1–26; sequence MGRQDQQLQVLNALDAAKTQWYHFTA. Residues 27–47 traverse the membrane as a helical segment; that stretch reads IIVAGMGFFTDAYDLFCISLV. Residues 48-70 lie on the Extracellular side of the membrane; it reads TKLLGRIYYTDPASPTPGSLPPN. A helical transmembrane segment spans residues 71–91; that stretch reads IAAAVNGVALCGTLSGQLFFG. At 92–100 the chain is on the cytoplasmic side; that stretch reads WLGDKLGRK. Residues 101–121 traverse the membrane as a helical segment; sequence SVYGMTLLLMVICSIASGLSF. Over 122–124 the chain is Extracellular; that stretch reads SHT. Residues 125–145 traverse the membrane as a helical segment; it reads PTSVMATLCFFRFWLGFGIGG. The Cytoplasmic segment spans residues 146-163; sequence DYPLSATIMSEYANKKTR. The helical transmembrane segment at 164–184 threads the bilayer; sequence GAFIAAVFAMQGFGILAGGVV. Over 185–213 the chain is Extracellular; it reads TLAMSAGFQAAFPAPAYEVNAAASTVPQA. The helical transmembrane segment at 214-234 threads the bilayer; that stretch reads DYVWRIILMLGALPAILTYYW. Topologically, residues 235–297 are cytoplasmic; the sequence is RMKMPETARY…ARFAKRHGAH (63 aa). A helical membrane pass occupies residues 298–318; that stretch reads LLGTAATWFLVDVAYYSQNLF. The Extracellular portion of the chain corresponds to 319–349; sequence QKDIFTSIHWIPKARTMSELEEVFRISRAQT. The chain crosses the membrane as a helical span at residues 350-370; sequence LIALCGTVPGYWFTVFLIDII. Over 371–374 the chain is Cytoplasmic; the sequence is GRFK. Residues 375–395 traverse the membrane as a helical segment; sequence IQLLGFAGMTAFMLGLAIPYH. The Extracellular segment spans residues 396-403; that stretch reads HWTMPGNQ. A helical membrane pass occupies residues 404–424; sequence VIFVFLYGFTFFFANFGPNAT. Residues 425–443 lie on the Cytoplasmic side of the membrane; it reads TFIVPAEIFPARLRSTCHG. Residues 444–464 form a helical membrane-spanning segment; that stretch reads ISAASGKAGAIIGAFGFLYAA. Residues 465 to 484 are Extracellular-facing; the sequence is QPQDKAHVDAGYKPGIGVRN. A helical membrane pass occupies residues 485–505; the sequence is ALFVLAGCNLVGFLMTWMLVP. The Cytoplasmic portion of the chain corresponds to 506-541; the sequence is ESKGKSLEEMSGEADDEEASANGGATAVNSSGVEMV. The disordered stretch occupies residues 512 to 541; sequence LEEMSGEADDEEASANGGATAVNSSGVEMV. Over residues 515-524 the composition is skewed to acidic residues; the sequence is MSGEADDEEA. Residues 532–541 show a composition bias toward polar residues; that stretch reads AVNSSGVEMV.

It belongs to the major facilitator superfamily. Phosphate:H(+) symporter (TC 2.A.1.9) family.

Its subcellular location is the membrane. Functionally, high-affinity transporter for external inorganic phosphate. This chain is Probable inorganic phosphate transporter 1-12 (PHT1-12), found in Oryza sativa subsp. japonica (Rice).